The chain runs to 522 residues: Calcium-dependent protein kinase 4 (522 aa).

The span at 1 to 10 shows a compositional bias: polar residues; sequence MGACFSSHTA. The disordered stretch occupies residues 1 to 43; it reads MGACFSSHTATAAADGGSGKRQQRKGDHKGKLPDGGGGEKEKE. The N-myristoyl glycine moiety is linked to residue Gly2. A compositionally biased stretch (basic and acidic residues) spans 29-43; sequence KGKLPDGGGGEKEKE. A Protein kinase domain is found at 59 to 319; it reads YQVGRLLGHG…AAQALSHPWV (261 aa). ATP contacts are provided by residues 65 to 73 and Lys88; that span reads LGHGQFGYT. Catalysis depends on Asp185, which acts as the Proton acceptor. The autoinhibitory domain stretch occupies residues 325–355; that stretch reads ASEIPVDISVLSNMRQFVKYSRFKQFALRAL. EF-hand domains are found at residues 362-397, 399-434, 441-476, and 481-508; these read EELA…DLPW, LKGP…IHQM, RWGL…GLKG, and LLEE…ASMS. The Ca(2+) site is built by Asp375, Asp377, Ser379, Ser381, Glu386, Asp412, Asn414, Asp416, Glu423, Asp454, Asp456, Asp458, Tyr460, Glu465, Asp486, Asp488, Asp490, Arg492, and Glu497.

The protein belongs to the protein kinase superfamily. Ser/Thr protein kinase family. CDPK subfamily.

Its subcellular location is the membrane. The catalysed reaction is L-seryl-[protein] + ATP = O-phospho-L-seryl-[protein] + ADP + H(+). The enzyme catalyses L-threonyl-[protein] + ATP = O-phospho-L-threonyl-[protein] + ADP + H(+). Activated by calcium. Autophosphorylation may play an important role in the regulation of the kinase activity. Its function is as follows. May play a role in signal transduction pathways that involve calcium as a second messenger. This is Calcium-dependent protein kinase 4 from Oryza sativa subsp. japonica (Rice).